A 169-amino-acid polypeptide reads, in one-letter code: MPESSRFGHLPWLLLSVLILVADRVTKDIFEGTLSMYQRIEVIPGYFDWTLAYNTGAAFSFLADAAGWQRWFFAAIAIVVSVVLVVWLKRLKRHETLLAVALAMVLGGALGNLYDRVVLGHVVDFILVHWQSRWFFPAFNLADTFITIGAILLALDMFKSDKSAKEAAQ.

3 consecutive transmembrane segments (helical) span residues 1–21 (MPES…LILV), 68–88 (WQRW…VVWL), and 94–114 (HETL…GNLY). Catalysis depends on residues aspartate 124 and aspartate 143. Residues 135 to 155 (FFPAFNLADTFITIGAILLAL) traverse the membrane as a helical segment.

It belongs to the peptidase A8 family.

It is found in the cell inner membrane. The enzyme catalyses Release of signal peptides from bacterial membrane prolipoproteins. Hydrolyzes -Xaa-Yaa-Zaa-|-(S,diacylglyceryl)Cys-, in which Xaa is hydrophobic (preferably Leu), and Yaa (Ala or Ser) and Zaa (Gly or Ala) have small, neutral side chains.. It participates in protein modification; lipoprotein biosynthesis (signal peptide cleavage). This protein specifically catalyzes the removal of signal peptides from prolipoproteins. In Ectopseudomonas mendocina (strain ymp) (Pseudomonas mendocina), this protein is Lipoprotein signal peptidase.